Reading from the N-terminus, the 620-residue chain is Probable potassium transport system protein Kup 1 (620 aa).

12 helical membrane-spanning segments follow: residues leucine 10–leucine 30, valine 50–isoleucine 70, methionine 102–isoleucine 122, leucine 138–lysine 158, phenylalanine 168–valine 188, methionine 211–tyrosine 231, tryptophan 246–leucine 266, methionine 284–isoleucine 304, isoleucine 336–phenylalanine 356, isoleucine 368–methionine 388, tryptophan 393–alanine 413, and isoleucine 415–valine 435.

The protein belongs to the HAK/KUP transporter (TC 2.A.72) family.

It is found in the cell inner membrane. The enzyme catalyses K(+)(in) + H(+)(in) = K(+)(out) + H(+)(out). Its function is as follows. Transport of potassium into the cell. Likely operates as a K(+):H(+) symporter. In Rhodopseudomonas palustris (strain BisB18), this protein is Probable potassium transport system protein Kup 1.